The primary structure comprises 1046 residues: UDP-N-acetylglucosamine--peptide N-acetylglucosaminyltransferase 110 kDa subunit (1046 aa).

An N-acetylalanine modification is found at alanine 2. Phosphoserine; by GSK3-beta; alternate occurs at positions 3 and 4. Serine 3 and serine 4 each carry an O-linked (GlcNAc) serine; alternate glycan. Serine 20 carries the phosphoserine modification. TPR repeat units lie at residues 21 to 54 (FQGL…EPDN), 89 to 122 (AEAY…KPDF), 123 to 156 (IDGY…NPDL), 157 to 190 (YCVR…QPNF), 191 to 224 (AVAW…DPNF), 225 to 258 (LDAY…SPNH), 259 to 292 (AVVH…QPHF), 293 to 326 (PDAY…CPTH), 327 to 360 (ADSL…FPEF), 361 to 394 (AAAH…SPTF), 395 to 428 (ADAY…NPAF), and 429 to 462 (ADAH…KPDF). A glycan (O-linked (GlcNAc) serine; by autocatalysis) is linked at serine 399. Threonine 454 carries the post-translational modification Phosphothreonine. One copy of the TPR 13; truncated repeat lies at 463 to 473 (PDAYCNLAHCL). Positions 464–466 (DAY) match the DFP motif motif. A Nuclear localization signal motif is present at residues 487-503 (KKLVSIVADQLEKNRLP). The active-site Proton acceptor is histidine 508. UDP is bound by residues glutamine 849, lysine 852, 906 to 908 (APK), 911 to 914 (HVRR), 930 to 932 (HTT), and aspartate 935. Tyrosine 989 bears the Phosphotyrosine mark. Residues 991–1010 (KKIRGKVWKQRISSPLFNTK) are required for phosphatidylinositol 3,4,5-triphosphate binding.

Belongs to the glycosyltransferase 41 family. O-GlcNAc transferase subfamily. Monomer; may exist in different oligomerization states in cells. Homotrimer, oligomerizes via TPR repeats 6 and 7. Trimerization is not necessary for activity in vitro, however it increases affinity for UDP-GlcNAc. Component of a THAP1/THAP3-HCFC1-OGT complex. Component of the NSL complex at least composed of MOF/KAT8, KANSL1, KANSL2, KANSL3, MCRS1, PHF20, OGT1/OGT, WDR5 and HCFC1. Found in a complex with KIF5B, RHOT1, RHOT2 and TRAK1. Found in a complex composed of at least SINHCAF, SIN3A, HDAC1, SAP30, RBBP4, OGT and TET1. Component of a complex composed of KMT2E/MLL5, OGT and USP7; the complex stabilizes KMT2E/MLL5, preventing KMT2E/MLL5 ubiquitination and proteasomal-mediated degradation. Interacts (via TPRs 1-6) with SIN3A; the interaction mediates transcriptional repression in parallel with histone deacetylase. Interacts (via TPR 5-6) with TET1, TET2 and TET3. Interacts (via TPR repeats 6 and 7) with ATXN10. Interacts with NSD2. Interacts with PROSER1; this interaction mediates TET2 O-GlcNAcylation and stability by promoting the interaction between OGT and TET2. Ubiquitinated by the SCF(FBXO31) complex, leading to its proteasomal degradation. Post-translationally, phosphorylation on Ser-3 or Ser-4 by GSK3-beta positively regulates its activity. Phosphorylation at Thr-454 by AMPK promotes nuclear localization. In terms of processing, glycosylated via autocatalysis; O-GlcNAcylation at Ser-399 promotes nuclear localization.

It localises to the nucleus. The protein resides in the cytoplasm. It catalyses the reaction L-seryl-[protein] + UDP-N-acetyl-alpha-D-glucosamine = 3-O-(N-acetyl-beta-D-glucosaminyl)-L-seryl-[protein] + UDP + H(+). The enzyme catalyses L-threonyl-[protein] + UDP-N-acetyl-alpha-D-glucosamine = 3-O-(N-acetyl-beta-D-glucosaminyl)-L-threonyl-[protein] + UDP + H(+). The protein operates within protein modification; protein glycosylation. With respect to regulation, subject to product inhibition by UDP. Functionally, catalyzes the transfer of a single N-acetylglucosamine from UDP-GlcNAc to a serine or threonine residue in cytoplasmic and nuclear proteins resulting in their modification with a beta-linked N-acetylglucosamine (O-GlcNAc). Glycosylates a large and diverse number of proteins including histone H2B, AKT1, AMPK, ATG4B, CAPRIN1, EZH2, FNIP1, GSDMD, KRT7, LMNA, LMNB1, LMNB2, RPTOR, HOXA1, PFKL, KMT2E/MLL5, MAPT/TAU, TET2, RBL2, RET, NOD2 and HCFC1. Can regulate their cellular processes via cross-talk between glycosylation and phosphorylation or by affecting proteolytic processing. Involved in insulin resistance in muscle and adipocyte cells via glycosylating insulin signaling components and inhibiting the 'Thr-308' phosphorylation of AKT1, enhancing IRS1 phosphorylation and attenuating insulin signaling. Involved in glycolysis regulation by mediating glycosylation of 6-phosphofructokinase PFKL, inhibiting its activity. Plays a key role in chromatin structure by mediating O-GlcNAcylation of 'Ser-112' of histone H2B: recruited to CpG-rich transcription start sites of active genes via its interaction with TET proteins (TET1, TET2 or TET3). As part of the NSL complex indirectly involved in acetylation of nucleosomal histone H4 on several lysine residues. O-GlcNAcylation of 'Ser-75' of EZH2 increases its stability, and facilitating the formation of H3K27me3 by the PRC2/EED-EZH2 complex. Stabilizes KMT2E/MLL5 by mediating its glycosylation, thereby preventing KMT2E/MLL5 ubiquitination. Regulates circadian oscillation of the clock genes and glucose homeostasis in the liver. Stabilizes clock proteins BMAL1 and CLOCK through O-glycosylation, which prevents their ubiquitination and subsequent degradation. Promotes the CLOCK-BMAL1-mediated transcription of genes in the negative loop of the circadian clock such as PER1/2 and CRY1/2. O-glycosylates HCFC1 and regulates its proteolytic processing and transcriptional activity. Component of a THAP1/THAP3-HCFC1-OGT complex that is required for the regulation of the transcriptional activity of RRM1. Regulates mitochondrial motility in neurons by mediating glycosylation of TRAK1. Promotes autophagy by mediating O-glycosylation of ATG4B. Acts as a regulator of mTORC1 signaling by mediating O-glycosylation of RPTOR and FNIP1: O-GlcNAcylation of RPTOR in response to glucose sufficiency promotes activation of the mTORC1 complex. This Sus scrofa (Pig) protein is UDP-N-acetylglucosamine--peptide N-acetylglucosaminyltransferase 110 kDa subunit (OGT).